The primary structure comprises 896 residues: Translation initiation factor IF-2 (896 aa).

The tract at residues 46–315 (LAHLNRQHGG…FNKPAQPVER (270 aa)) is disordered. A compositionally biased stretch (basic and acidic residues) spans 99–247 (SASEEQEREE…RKQQEKEDVH (149 aa)). Positions 269–278 (SRKRGKKRRR) are enriched in basic residues. Residues 279 to 288 (KDEESDDTPR) show a composition bias toward basic and acidic residues. The region spanning 396–565 (PRAPVVTVMG…LLQSEVLDLR (170 aa)) is the tr-type G domain. The interval 405 to 412 (GHVDHGKT) is G1. GTP is bound at residue 405 to 412 (GHVDHGKT). Residues 430 to 434 (GITQH) are G2. Residues 451 to 454 (DTPG) form a G3 region. Residues 451 to 455 (DTPGH) and 505 to 508 (NKMD) contribute to the GTP site. Positions 505-508 (NKMD) are G4. Positions 541 to 543 (SAH) are G5.

This sequence belongs to the TRAFAC class translation factor GTPase superfamily. Classic translation factor GTPase family. IF-2 subfamily.

The protein localises to the cytoplasm. Functionally, one of the essential components for the initiation of protein synthesis. Protects formylmethionyl-tRNA from spontaneous hydrolysis and promotes its binding to the 30S ribosomal subunits. Also involved in the hydrolysis of GTP during the formation of the 70S ribosomal complex. This Idiomarina loihiensis (strain ATCC BAA-735 / DSM 15497 / L2-TR) protein is Translation initiation factor IF-2.